Reading from the N-terminus, the 210-residue chain is Putative protein-lysine deacylase ABHD14B (210 aa).

Ala-2 is subject to N-acetylalanine. The residue at position 91 (Ser-91) is a Phosphoserine. Catalysis depends on charge relay system residues Ser-111, Asp-162, and His-188.

The protein belongs to the AB hydrolase superfamily. ABHD14 family. May interact with TAF1. As to expression, ubiquitous. Detected in spleen, thymus, prostate, testis, ovary, small intestine, colon, peripheral blood leukocyte, heart, placenta, lung, liver, skeletal muscle, pancreas and kidney.

The protein resides in the cytoplasm. It is found in the nucleus. It carries out the reaction L-lysyl-[protein] + acetyl-CoA = N(6)-acetyl-L-lysyl-[protein] + CoA + H(+). Its function is as follows. Acts as an atypical protein-lysine deacetylase in vitro. Catalyzes the deacetylation of lysine residues using CoA as substrate, generating acetyl-CoA and the free amine of protein-lysine residues. Additional experiments are however required to confirm the protein-lysine deacetylase activity in vivo. Has hydrolase activity towards various surrogate p-nitrophenyl (pNp) substrates, such as pNp-butyrate, pNp-acetate and pNp-octanoate in vitro, with a strong preference for pNp-acetate. May activate transcription. This is Putative protein-lysine deacylase ABHD14B from Homo sapiens (Human).